Consider the following 377-residue polypeptide: D-alanine--D-alanine ligase (377 aa).

One can recognise an ATP-grasp domain in the interval 141-347 (KRILNQAGIR…YSELIDRLIQ (207 aa)). 171–226 (KEELGDLVFVKPAKQGSSVGIHKVDTEEEYETAMKDAFTYDYKVLVEAGIKNPREI) contributes to the ATP binding site. 3 residues coordinate Mg(2+): D301, E314, and N316.

The protein belongs to the D-alanine--D-alanine ligase family. Mg(2+) is required as a cofactor. It depends on Mn(2+) as a cofactor.

Its subcellular location is the cytoplasm. It carries out the reaction 2 D-alanine + ATP = D-alanyl-D-alanine + ADP + phosphate + H(+). It functions in the pathway cell wall biogenesis; peptidoglycan biosynthesis. Its function is as follows. Cell wall formation. The sequence is that of D-alanine--D-alanine ligase from Limosilactobacillus fermentum (strain NBRC 3956 / LMG 18251) (Lactobacillus fermentum).